The primary structure comprises 1010 residues: Glycine--tRNA ligase (1010 aa).

The interval 1-312 (MSEHPLTLQS…TSESVVPMIS (312 aa)) is glycine--tRNA ligase alpha subunit. The interval 313 to 1010 (STEDLLLEIG…SLCHWESVAV (698 aa)) is glycine--tRNA ligase beta subunit.

This sequence belongs to the class-II aminoacyl-tRNA synthetase family.

It is found in the cytoplasm. The catalysed reaction is tRNA(Gly) + glycine + ATP = glycyl-tRNA(Gly) + AMP + diphosphate. The sequence is that of Glycine--tRNA ligase (glyQS) from Chlamydia pneumoniae (Chlamydophila pneumoniae).